Consider the following 348-residue polypeptide: S-adenosylmethionine:tRNA ribosyltransferase-isomerase (348 aa).

The protein belongs to the QueA family. As to quaternary structure, monomer.

Its subcellular location is the cytoplasm. The enzyme catalyses 7-aminomethyl-7-carbaguanosine(34) in tRNA + S-adenosyl-L-methionine = epoxyqueuosine(34) in tRNA + adenine + L-methionine + 2 H(+). Its pathway is tRNA modification; tRNA-queuosine biosynthesis. Transfers and isomerizes the ribose moiety from AdoMet to the 7-aminomethyl group of 7-deazaguanine (preQ1-tRNA) to give epoxyqueuosine (oQ-tRNA). This chain is S-adenosylmethionine:tRNA ribosyltransferase-isomerase, found in Alteromonas mediterranea (strain DSM 17117 / CIP 110805 / LMG 28347 / Deep ecotype).